We begin with the raw amino-acid sequence, 436 residues long: 3-ketoacyl-CoA thiolase (436 aa).

Catalysis depends on C99, which acts as the Acyl-thioester intermediate. Residues H392 and C422 each act as proton acceptor in the active site.

The protein belongs to the thiolase-like superfamily. Thiolase family. Heterotetramer of two alpha chains (FadJ) and two beta chains (FadI).

The protein localises to the cytoplasm. The enzyme catalyses an acyl-CoA + acetyl-CoA = a 3-oxoacyl-CoA + CoA. The protein operates within lipid metabolism; fatty acid beta-oxidation. In terms of biological role, catalyzes the final step of fatty acid oxidation in which acetyl-CoA is released and the CoA ester of a fatty acid two carbons shorter is formed. This chain is 3-ketoacyl-CoA thiolase, found in Shewanella denitrificans (strain OS217 / ATCC BAA-1090 / DSM 15013).